Reading from the N-terminus, the 177-residue chain is Large ribosomal subunit protein uL6 (177 aa).

This sequence belongs to the universal ribosomal protein uL6 family. Part of the 50S ribosomal subunit.

Its function is as follows. This protein binds to the 23S rRNA, and is important in its secondary structure. It is located near the subunit interface in the base of the L7/L12 stalk, and near the tRNA binding site of the peptidyltransferase center. This is Large ribosomal subunit protein uL6 from Acinetobacter baylyi (strain ATCC 33305 / BD413 / ADP1).